The chain runs to 147 residues: Putative protein adenylyltransferase MJ1305 (147 aa).

The GSX(10)DXD motif motif lies at G32–D46. Positions 44 and 46 each coordinate Mg(2+).

The protein belongs to the MntA antitoxin family. The cofactor is Mg(2+).

It carries out the reaction L-tyrosyl-[protein] + ATP = O-(5'-adenylyl)-L-tyrosyl-[protein] + diphosphate. The enzyme catalyses O-(5'-adenylyl)-L-tyrosyl-[protein] + ATP = O-[5'-(adenylyl-(5'-&gt;3')-adenylyl)]-L-tyrosyl-[protein] + diphosphate. In terms of biological role, putative antitoxin component of a putative type VII toxin-antitoxin (TA) system. Its cognate toxin might be MJ1304, which it might AMPylate. The chain is Putative protein adenylyltransferase MJ1305 from Methanocaldococcus jannaschii (strain ATCC 43067 / DSM 2661 / JAL-1 / JCM 10045 / NBRC 100440) (Methanococcus jannaschii).